A 334-amino-acid chain; its full sequence is Holliday junction branch migration complex subunit RuvB (334 aa).

The large ATPase domain (RuvB-L) stretch occupies residues 4-184 (ADRLIQPQIQ…FGIPLRLEFY (181 aa)). ATP-binding positions include Arg24, Gly65, Lys68, Thr69, Thr70, 131–133 (EDY), Arg174, Tyr184, and Arg221. Thr69 is a Mg(2+) binding site. Residues 185–255 (NIKDLSTIVT…VAEHALDLLD (71 aa)) are small ATPAse domain (RuvB-S). Residues 258–334 (SEGFDYMDRK…YQHFELIKPE (77 aa)) are head domain (RuvB-H). Residues Arg294, Arg313, and Arg318 each coordinate DNA.

The protein belongs to the RuvB family. As to quaternary structure, homohexamer. Forms an RuvA(8)-RuvB(12)-Holliday junction (HJ) complex. HJ DNA is sandwiched between 2 RuvA tetramers; dsDNA enters through RuvA and exits via RuvB. An RuvB hexamer assembles on each DNA strand where it exits the tetramer. Each RuvB hexamer is contacted by two RuvA subunits (via domain III) on 2 adjacent RuvB subunits; this complex drives branch migration. In the full resolvosome a probable DNA-RuvA(4)-RuvB(12)-RuvC(2) complex forms which resolves the HJ.

The protein localises to the cytoplasm. The enzyme catalyses ATP + H2O = ADP + phosphate + H(+). The RuvA-RuvB-RuvC complex processes Holliday junction (HJ) DNA during genetic recombination and DNA repair, while the RuvA-RuvB complex plays an important role in the rescue of blocked DNA replication forks via replication fork reversal (RFR). RuvA specifically binds to HJ cruciform DNA, conferring on it an open structure. The RuvB hexamer acts as an ATP-dependent pump, pulling dsDNA into and through the RuvAB complex. RuvB forms 2 homohexamers on either side of HJ DNA bound by 1 or 2 RuvA tetramers; 4 subunits per hexamer contact DNA at a time. Coordinated motions by a converter formed by DNA-disengaged RuvB subunits stimulates ATP hydrolysis and nucleotide exchange. Immobilization of the converter enables RuvB to convert the ATP-contained energy into a lever motion, pulling 2 nucleotides of DNA out of the RuvA tetramer per ATP hydrolyzed, thus driving DNA branch migration. The RuvB motors rotate together with the DNA substrate, which together with the progressing nucleotide cycle form the mechanistic basis for DNA recombination by continuous HJ branch migration. Branch migration allows RuvC to scan DNA until it finds its consensus sequence, where it cleaves and resolves cruciform DNA. This Shewanella baltica (strain OS195) protein is Holliday junction branch migration complex subunit RuvB.